Reading from the N-terminus, the 347-residue chain is GMP reductase (347 aa).

108 to 131 (ADFEKTVQILALNPALNFVCIDVA) is a binding site for NADP(+). K(+) contacts are provided by Gly-181 and Gly-183. The active-site Thioimidate intermediate is Cys-186. An NADP(+)-binding site is contributed by 216–239 (IVSDGGCTMPGDVAKAFGGGADFV).

It belongs to the IMPDH/GMPR family. GuaC type 1 subfamily. Homotetramer.

The catalysed reaction is IMP + NH4(+) + NADP(+) = GMP + NADPH + 2 H(+). Functionally, catalyzes the irreversible NADPH-dependent deamination of GMP to IMP. It functions in the conversion of nucleobase, nucleoside and nucleotide derivatives of G to A nucleotides, and in maintaining the intracellular balance of A and G nucleotides. This is GMP reductase from Salmonella choleraesuis (strain SC-B67).